A 274-amino-acid chain; its full sequence is Chemotaxis protein methyltransferase 1 (274 aa).

Residues 1 to 274 (MSAANADFEL…CSPGIIYRAK (274 aa)) enclose the CheR-type methyltransferase domain. S-adenosyl-L-methionine is bound by residues Asn-72, Thr-74, Arg-78, Glu-115, Asp-144, 200–201 (NL), and 217–218 (RN).

It catalyses the reaction L-glutamyl-[protein] + S-adenosyl-L-methionine = [protein]-L-glutamate 5-O-methyl ester + S-adenosyl-L-homocysteine. Methylation of the membrane-bound methyl-accepting chemotaxis proteins (MCP) to form gamma-glutamyl methyl ester residues in MCP. This chain is Chemotaxis protein methyltransferase 1 (cheR1), found in Pseudomonas aeruginosa (strain ATCC 15692 / DSM 22644 / CIP 104116 / JCM 14847 / LMG 12228 / 1C / PRS 101 / PAO1).